Consider the following 450-residue polypeptide: Methylenetetrahydrofolate--tRNA-(uracil-5-)-methyltransferase TrmFO (450 aa).

FAD is bound at residue 9-14; the sequence is GGGMAG.

The protein belongs to the MnmG family. TrmFO subfamily. The cofactor is FAD.

The protein resides in the cytoplasm. It catalyses the reaction uridine(54) in tRNA + (6R)-5,10-methylene-5,6,7,8-tetrahydrofolate + NADH + H(+) = 5-methyluridine(54) in tRNA + (6S)-5,6,7,8-tetrahydrofolate + NAD(+). The enzyme catalyses uridine(54) in tRNA + (6R)-5,10-methylene-5,6,7,8-tetrahydrofolate + NADPH + H(+) = 5-methyluridine(54) in tRNA + (6S)-5,6,7,8-tetrahydrofolate + NADP(+). In terms of biological role, catalyzes the folate-dependent formation of 5-methyl-uridine at position 54 (M-5-U54) in all tRNAs. This is Methylenetetrahydrofolate--tRNA-(uracil-5-)-methyltransferase TrmFO from Roseobacter denitrificans (strain ATCC 33942 / OCh 114) (Erythrobacter sp. (strain OCh 114)).